We begin with the raw amino-acid sequence, 426 residues long: Enolase (426 aa).

Residue Gln163 participates in (2R)-2-phosphoglycerate binding. The active-site Proton donor is the Glu205. 3 residues coordinate Mg(2+): Asp242, Glu283, and Asp310. (2R)-2-phosphoglycerate contacts are provided by Lys335, Arg364, Ser365, and Lys386. Catalysis depends on Lys335, which acts as the Proton acceptor.

The protein belongs to the enolase family. Mg(2+) serves as cofactor.

The protein localises to the cytoplasm. It localises to the secreted. Its subcellular location is the cell surface. It carries out the reaction (2R)-2-phosphoglycerate = phosphoenolpyruvate + H2O. It functions in the pathway carbohydrate degradation; glycolysis; pyruvate from D-glyceraldehyde 3-phosphate: step 4/5. Catalyzes the reversible conversion of 2-phosphoglycerate (2-PG) into phosphoenolpyruvate (PEP). It is essential for the degradation of carbohydrates via glycolysis. This Clavibacter sepedonicus (Clavibacter michiganensis subsp. sepedonicus) protein is Enolase.